Reading from the N-terminus, the 420-residue chain is Bile acid-CoA:amino acid N-acyltransferase (420 aa).

An N6-succinyllysine modification is found at Lys40. Phosphoserine is present on Ser125. Residues Cys235 and Asp328 each act as charge relay system in the active site. 2 positions are modified to N6-succinyllysine: Lys346 and Lys350. His362 functions as the Charge relay system in the catalytic mechanism. Position 409 is an N6-succinyllysine (Lys409). Ser418 carries the post-translational modification Phosphoserine.

Belongs to the C/M/P thioester hydrolase family. In terms of assembly, monomer. In terms of tissue distribution, highly expressed in liver, kidney, gallbladder, proximal intestine and distal intestine. Weakly expressed in adrenal gland, lung, brain and muscle.

It localises to the cytoplasm. Its subcellular location is the cytosol. The protein localises to the peroxisome. It catalyses the reaction choloyl-CoA + glycine = glycocholate + CoA + H(+). The enzyme catalyses hexadecanoyl-CoA + H2O = hexadecanoate + CoA + H(+). The catalysed reaction is choloyl-CoA + H2O = cholate + CoA + H(+). It carries out the reaction chenodeoxycholoyl-CoA + H2O = chenodeoxycholate + CoA + H(+). It catalyses the reaction eicosanoyl-CoA + H2O = eicosanoate + CoA + H(+). The enzyme catalyses octadecanoyl-CoA + H2O = octadecanoate + CoA + H(+). The catalysed reaction is docosanoyl-CoA + H2O = docosanoate + CoA + H(+). It carries out the reaction tetracosanoyl-CoA + H2O = tetracosanoate + CoA + H(+). It catalyses the reaction hexacosanoyl-CoA + H2O = hexacosanoate + CoA + H(+). The enzyme catalyses dodecanoyl-CoA + H2O = dodecanoate + CoA + H(+). The catalysed reaction is tetradecanoyl-CoA + H2O = tetradecanoate + CoA + H(+). It carries out the reaction choloyl-CoA + taurine = taurocholate + CoA + H(+). It catalyses the reaction chenodeoxycholoyl-CoA + glycine = glycochenodeoxycholate + CoA + H(+). The enzyme catalyses chenodeoxycholoyl-CoA + taurine = taurochenodeoxycholate + CoA + H(+). The catalysed reaction is eicosanoyl-CoA + glycine = N-eicosanoylglycinate + CoA + H(+). It carries out the reaction hexacosanoyl-CoA + glycine = N-hexacosanoylglycine + CoA + H(+). It catalyses the reaction docosanoyl-CoA + glycine = N-docosanoylglycine + CoA + H(+). Catalyzes the amidation of bile acids (BAs) with the amino acid taurine. Selective for taurine conjugation of cholyl CoA and only taurine-conjugated BAs are found in bile. Amidation of BAs in the liver with taurine prior to their excretion into bile is an important biochemical event in bile acid metabolism. This conjugation (or amidation) plays several important biological roles in that it promotes the secretion of BAs and cholesterol into bile and increases the detergent properties of BAs in the intestine, which facilitates lipid and vitamin absorption. May also act as an acyl-CoA thioesterase that regulates intracellular levels of free fatty acids. In vitro, catalyzes the hydrolysis of long- and very long-chain saturated acyl-CoAs to the free fatty acid and coenzyme A (CoASH), and conjugates glycine to these acyl-CoAs. This Mus musculus (Mouse) protein is Bile acid-CoA:amino acid N-acyltransferase (Baat).